The following is a 217-amino-acid chain: Enolase-phosphatase E1 (217 aa).

Mg(2+) is bound by residues D9 and E11. Residues 112 to 113 and K151 each bind substrate; that span reads SS. D176 is a binding site for Mg(2+).

The protein belongs to the HAD-like hydrolase superfamily. MasA/MtnC family. In terms of assembly, monomer. It depends on Mg(2+) as a cofactor.

It localises to the cytoplasm. Its subcellular location is the nucleus. It carries out the reaction 5-methylsulfanyl-2,3-dioxopentyl phosphate + H2O = 1,2-dihydroxy-5-(methylsulfanyl)pent-1-en-3-one + phosphate. It functions in the pathway amino-acid biosynthesis; L-methionine biosynthesis via salvage pathway; L-methionine from S-methyl-5-thio-alpha-D-ribose 1-phosphate: step 3/6. It participates in amino-acid biosynthesis; L-methionine biosynthesis via salvage pathway; L-methionine from S-methyl-5-thio-alpha-D-ribose 1-phosphate: step 4/6. Bifunctional enzyme that catalyzes the enolization of 2,3-diketo-5-methylthiopentyl-1-phosphate (DK-MTP-1-P) into the intermediate 2-hydroxy-3-keto-5-methylthiopentenyl-1-phosphate (HK-MTPenyl-1-P), which is then dephosphorylated to form the acireductone 1,2-dihydroxy-3-keto-5-methylthiopentene (DHK-MTPene). This chain is Enolase-phosphatase E1, found in Lachancea thermotolerans (strain ATCC 56472 / CBS 6340 / NRRL Y-8284) (Yeast).